The primary structure comprises 265 residues: Hydroxyethylthiazole kinase (265 aa).

A substrate-binding site is contributed by methionine 43. Residues lysine 118 and threonine 165 each contribute to the ATP site. Glycine 192 provides a ligand contact to substrate.

It belongs to the Thz kinase family. Mg(2+) is required as a cofactor.

It catalyses the reaction 5-(2-hydroxyethyl)-4-methylthiazole + ATP = 4-methyl-5-(2-phosphooxyethyl)-thiazole + ADP + H(+). It functions in the pathway cofactor biosynthesis; thiamine diphosphate biosynthesis; 4-methyl-5-(2-phosphoethyl)-thiazole from 5-(2-hydroxyethyl)-4-methylthiazole: step 1/1. Its function is as follows. Catalyzes the phosphorylation of the hydroxyl group of 4-methyl-5-beta-hydroxyethylthiazole (THZ). The polypeptide is Hydroxyethylthiazole kinase (Pyrococcus abyssi (strain GE5 / Orsay)).